We begin with the raw amino-acid sequence, 577 residues long: Isocitrate dehydrogenase kinase/phosphatase (577 aa).

Residues 315 to 321 (APGIRGM) and K336 contribute to the ATP site. The active site involves D371.

Belongs to the AceK family.

It localises to the cytoplasm. It carries out the reaction L-seryl-[isocitrate dehydrogenase] + ATP = O-phospho-L-seryl-[isocitrate dehydrogenase] + ADP + H(+). Functionally, bifunctional enzyme which can phosphorylate or dephosphorylate isocitrate dehydrogenase (IDH) on a specific serine residue. This is a regulatory mechanism which enables bacteria to bypass the Krebs cycle via the glyoxylate shunt in response to the source of carbon. When bacteria are grown on glucose, IDH is fully active and unphosphorylated, but when grown on acetate or ethanol, the activity of IDH declines drastically concomitant with its phosphorylation. The polypeptide is Isocitrate dehydrogenase kinase/phosphatase (Escherichia fergusonii (strain ATCC 35469 / DSM 13698 / CCUG 18766 / IAM 14443 / JCM 21226 / LMG 7866 / NBRC 102419 / NCTC 12128 / CDC 0568-73)).